A 223-amino-acid chain; its full sequence is Adenine phosphoribosyltransferase (223 aa).

Belongs to the purine/pyrimidine phosphoribosyltransferase family. Homodimer.

It localises to the cytoplasm. The enzyme catalyses AMP + diphosphate = 5-phospho-alpha-D-ribose 1-diphosphate + adenine. The protein operates within purine metabolism; AMP biosynthesis via salvage pathway; AMP from adenine: step 1/1. In terms of biological role, catalyzes a salvage reaction resulting in the formation of AMP, that is energically less costly than de novo synthesis. The protein is Adenine phosphoribosyltransferase of Mycobacterium bovis (strain ATCC BAA-935 / AF2122/97).